Here is a 29-residue protein sequence, read N- to C-terminus: MLIGEAVLAVVTVAVVAYLTYVMMYPTRF.

Residues 2-22 traverse the membrane as a helical segment; sequence LIGEAVLAVVTVAVVAYLTYV.

The protein belongs to the KdpF family. The system is composed of three essential subunits: KdpA, KdpB and KdpC. The complex also contains KdpF, a small non-essential subunit.

It is found in the cell membrane. Its function is as follows. Part of the high-affinity ATP-driven potassium transport (or Kdp) system, which catalyzes the hydrolysis of ATP coupled with the electrogenic transport of potassium into the cytoplasm. This subunit may be involved in stabilization of the complex. The Kdp system is essential for growth under K(+) limitation, and for survival under desiccation and salt crystal inclusion. The chain is Potassium-transporting ATPase KdpF subunit from Halobacterium salinarum (strain ATCC 29341 / DSM 671 / R1).